The primary structure comprises 308 residues: Dioxygenase peniF (308 aa).

Positions 144 and 225 each coordinate Fe cation.

The protein belongs to the PhyH family. In terms of assembly, homodimer. The cofactor is Fe cation.

Its function is as follows. Dioxygenase; part of the gene cluster that mediates the biosynthesis of penifulvin A, a potent insecticidal sesquiterpene that features a [5.5.5.6]dioxafenestrane ring. The first step of the pathway is performed by the sesquiterpene cyclase peniA that generates the angular triquinane scaffold silphinene via cyclization of the linear farnesyl pyrophosphate (FPP). The cytochrome P450 monooxygenase peniB and the flavin-dependent monooxygenase peniC then catalyze a series of oxidation reactions to transform silphinene into penifulvin A. The dioxygenases peniD and peniF, as well as the acetyltransferase peniE, do not seem to be involved in the biosynthesis of penifulvin A. The chain is Dioxygenase peniF from Penicillium patulum (Penicillium griseofulvum).